The following is a 459-amino-acid chain: Serine--tRNA ligase (459 aa).

254–256 serves as a coordination point for L-serine; the sequence is TAE. ATP contacts are provided by residues 285-287 and Val301; that span reads RKE. Glu308 is a binding site for L-serine. 372 to 375 lines the ATP pocket; sequence EMVS. Thr408 is an L-serine binding site.

This sequence belongs to the class-II aminoacyl-tRNA synthetase family. Type-1 seryl-tRNA synthetase subfamily. In terms of assembly, homodimer. The tRNA molecule binds across the dimer.

The protein resides in the cytoplasm. It catalyses the reaction tRNA(Ser) + L-serine + ATP = L-seryl-tRNA(Ser) + AMP + diphosphate + H(+). It carries out the reaction tRNA(Sec) + L-serine + ATP = L-seryl-tRNA(Sec) + AMP + diphosphate + H(+). Its pathway is aminoacyl-tRNA biosynthesis; selenocysteinyl-tRNA(Sec) biosynthesis; L-seryl-tRNA(Sec) from L-serine and tRNA(Sec): step 1/1. Functionally, catalyzes the attachment of serine to tRNA(Ser). Is also able to aminoacylate tRNA(Sec) with serine, to form the misacylated tRNA L-seryl-tRNA(Sec), which will be further converted into selenocysteinyl-tRNA(Sec). The protein is Serine--tRNA ligase of Desulfurococcus amylolyticus (strain DSM 18924 / JCM 16383 / VKM B-2413 / 1221n) (Desulfurococcus kamchatkensis).